A 349-amino-acid chain; its full sequence is Transcription repressor OFP5 (349 aa).

3 disordered regions span residues 1-20, 29-94, and 143-183; these read MMRWGRKKPVSSSSSSGLSR, KLSG…KESN, and KQRC…GYSR. Residues 10-20 show a composition bias toward low complexity; that stretch reads VSSSSSSGLSR. Residues 37-48 are compositionally biased toward basic and acidic residues; that stretch reads KPAKEKKQDEKA. The segment covering 49 to 62 has biased composition (polar residues); sequence SQNISVKTSLSSTT. 2 stretches are compositionally biased toward basic and acidic residues: residues 63–94 and 143–167; these read RRSDIHENSKRFQRVSVEKENSATRSADKESN and KQRCERRDQRLLEQKPKRSEQDAGV. Residues 286–345 form the OVATE domain; sequence VVKCSSDPQKDFRDSMIEMIMENGINHPEELKELLVCYLRLNTDEYHDMIISVFQQVHND.

Interacts with BLH1, BLH2, BLH3, BLH4, BLH6 and BLH10. Expressed in roots, rosette and cauline leaves, and flower buds.

It is found in the nucleus. Functionally, transcriptional repressor that regulates multiple aspects of plant growth and development through the regulation of BEL1-LIKE (BLH) and KNOX TALE (KNAT) homeodomain transcription factors. Required for embryo development. This chain is Transcription repressor OFP5 (OFP5), found in Arabidopsis thaliana (Mouse-ear cress).